The chain runs to 205 residues: dITP/XTP pyrophosphatase (205 aa).

7–12 lines the substrate pocket; the sequence is SNNRGK. Glu-39 and Asp-68 together coordinate Mg(2+). The active-site Proton acceptor is the Asp-68. Substrate contacts are provided by residues Ala-69, 154-157, Lys-177, and 182-183; these read FGFD and HR.

This sequence belongs to the HAM1 NTPase family. Homodimer. It depends on Mg(2+) as a cofactor.

The enzyme catalyses XTP + H2O = XMP + diphosphate + H(+). It carries out the reaction dITP + H2O = dIMP + diphosphate + H(+). The catalysed reaction is ITP + H2O = IMP + diphosphate + H(+). Pyrophosphatase that catalyzes the hydrolysis of nucleoside triphosphates to their monophosphate derivatives, with a high preference for the non-canonical purine nucleotides XTP (xanthosine triphosphate), dITP (deoxyinosine triphosphate) and ITP. Seems to function as a house-cleaning enzyme that removes non-canonical purine nucleotides from the nucleotide pool, thus preventing their incorporation into DNA/RNA and avoiding chromosomal lesions. The sequence is that of dITP/XTP pyrophosphatase from Acidovorax ebreus (strain TPSY) (Diaphorobacter sp. (strain TPSY)).